We begin with the raw amino-acid sequence, 285 residues long: Inositol monophosphatase 1 (285 aa).

Glu73, Asp93, Ile95, and Asp96 together coordinate Mg(2+). A substrate-binding site is contributed by Glu73. Residues 95 to 98 (IDGT), 198 to 200 (GTA), Glu217, and Asp224 each bind substrate. Residue Asp224 participates in Mg(2+) binding.

This sequence belongs to the inositol monophosphatase superfamily. In terms of assembly, homodimer. The cofactor is Mg(2+).

The protein resides in the cytoplasm. The enzyme catalyses a myo-inositol phosphate + H2O = myo-inositol + phosphate. It catalyses the reaction 1D-myo-inositol 1-phosphate + H2O = myo-inositol + phosphate. It carries out the reaction 1D-myo-inositol 2-phosphate + H2O = myo-inositol + phosphate. The catalysed reaction is 1D-myo-inositol 3-phosphate + H2O = myo-inositol + phosphate. The enzyme catalyses 1D-myo-inositol 4-phosphate + H2O = myo-inositol + phosphate. It catalyses the reaction 1D-myo-inositol 5-phosphate + H2O = myo-inositol + phosphate. It carries out the reaction 1D-myo-inositol 6-phosphate + H2O = myo-inositol + phosphate. The catalysed reaction is scyllo-inositol 1-phosphate + H2O = scyllo-inositol + phosphate. The enzyme catalyses alpha-D-galactose 1-phosphate + H2O = D-galactose + phosphate. It catalyses the reaction alpha-D-glucose 1-phosphate + H2O = D-glucose + phosphate. It carries out the reaction D-glucose 6-phosphate + H2O = D-glucose + phosphate. The catalysed reaction is beta-D-fructose 1-phosphate + H2O = D-fructose + phosphate. The enzyme catalyses glycerol 2-phosphate + H2O = glycerol + phosphate. It catalyses the reaction adenosine 2'-phosphate + H2O = adenosine + phosphate. Its pathway is polyol metabolism; myo-inositol biosynthesis; myo-inositol from D-glucose 6-phosphate: step 2/2. With respect to regulation, inhibited by Li(+), Ca(2+) and Mn(2+), but also by Mg(2+) at concentrations above 3 mM. Its function is as follows. Phosphatase involved in the dephosphorylation of myo-inositol monophosphate to generate myo-inositol. Is also able to dephosphorylate scyllo-inositol-phosphate, myo-inositol 1,4-diphosphate, scyllo-inositol-1,3-diphosphate and scyllo-inositol-1,4-diphosphate. Also dephosphorylates in vitro other sugar-phosphates including D-galactose-1-phosphate, glucose-1-phosphate, glucose-6-phosphate, fructose-1-phosphate, beta-glycerophosphate and 2'-AMP. Responsible for the provision of inositol required for synthesis of phosphatidylinositol and polyphosphoinositides, and involved in maintaining normal brain function. Has been implicated as the pharmacological target for lithium Li(+) action in brain. This is Inositol monophosphatase 1 (impa1) from Xenopus laevis (African clawed frog).